A 230-amino-acid polypeptide reads, in one-letter code: NADH-quinone oxidoreductase subunit 9 (230 aa).

4Fe-4S ferredoxin-type domains are found at residues 60–93 (GRPV…MQAK) and 104–133 (AWFE…MSKE). Residues cysteine 73, cysteine 76, cysteine 79, cysteine 83, cysteine 113, cysteine 116, cysteine 119, and cysteine 123 each contribute to the [4Fe-4S] cluster site.

This sequence belongs to the complex I 23 kDa subunit family. NDH-1 is composed of 14 different subunits. Subunits Nqo7-14 constitute the membrane sector of the complex. [4Fe-4S] cluster is required as a cofactor.

The protein resides in the cell inner membrane. The catalysed reaction is a quinone + NADH + 5 H(+)(in) = a quinol + NAD(+) + 4 H(+)(out). Its function is as follows. NDH-1 shuttles electrons from NADH, via FMN and iron-sulfur (Fe-S) centers, to quinones in the respiratory chain. The immediate electron acceptor for the enzyme in this species is believed to be menaquinone. Couples the redox reaction to proton translocation (for every two electrons transferred, four hydrogen ions are translocated across the cytoplasmic membrane), and thus conserves the redox energy in a proton gradient. The sequence is that of NADH-quinone oxidoreductase subunit 9 (nqo9) from Rhodothermus marinus (Rhodothermus obamensis).